Reading from the N-terminus, the 493-residue chain is MHIKMKDIFKAFGQNQVLSGVSFELQEGEVHALMGENGAGKSTLMNLLTGLHKLDSGTIEIDGKETYFSDPKEAEQNGIAFIHQELNIWPEMTVLENLFIGRELSSKLGFLNNKKMKALAKEQLERLGVSISLEKEAGDCSVGQQQMIEIAKALMTDAKVIIMDEPTAALTEREIEKLFGVIRALKKNGVSIVYISHRMEEIFTICDRITVMRDGKTVDTKRIPDTDFHEVVKKMVGRELTERYPERQPNPGRVVLEVKQASKKGVFQNISFSVRSGEIVGISGLMGAGRTELMRAVFGLDPLDSGDIFIEGKKAALKKPSDAVQKGIGFITENRKDEGLVLDTSIRENIALPNLASFSPKGWIDKKSEQEFVDLLIKRLTIKTESPETHARNLSGGNQQKVVIAKWIGIGPKVLILDEPTRGVDVGAKREIYQLMNELTDRGVAIVMVSSELPEILGMSDRVLVIHEGTLSGELSRNDATQERIMTLATGGR.

ABC transporter domains follow at residues 3 to 239 (IKMK…VGRE) and 252 to 493 (GRVV…TGGR). 35–42 (GENGAGKS) contacts ATP.

The protein belongs to the ABC transporter superfamily. Ribose importer (TC 3.A.1.2.1) family. As to quaternary structure, the complex is composed of an ATP-binding protein (RbsA), two transmembrane proteins (RbsC) and a solute-binding protein (RbsB).

The protein resides in the cell membrane. The enzyme catalyses D-ribose(out) + ATP + H2O = D-ribose(in) + ADP + phosphate + H(+). In terms of biological role, part of the ABC transporter complex RbsABC involved in ribose import. Responsible for energy coupling to the transport system. The protein is Ribose import ATP-binding protein RbsA of Bacillus licheniformis (strain ATCC 14580 / DSM 13 / JCM 2505 / CCUG 7422 / NBRC 12200 / NCIMB 9375 / NCTC 10341 / NRRL NRS-1264 / Gibson 46).